We begin with the raw amino-acid sequence, 411 residues long: Pyridinium-3,5-bisthiocarboxylic acid mononucleotide nickel insertion protein (411 aa).

The protein belongs to the LarC family.

The enzyme catalyses Ni(II)-pyridinium-3,5-bisthiocarboxylate mononucleotide = pyridinium-3,5-bisthiocarboxylate mononucleotide + Ni(2+). Involved in the biosynthesis of a nickel-pincer cofactor ((SCS)Ni(II) pincer complex). Binds Ni(2+), and functions in nickel delivery to pyridinium-3,5-bisthiocarboxylic acid mononucleotide (P2TMN), to form the mature cofactor. Is thus probably required for the activation of nickel-pincer cofactor-dependent enzymes. The polypeptide is Pyridinium-3,5-bisthiocarboxylic acid mononucleotide nickel insertion protein (Geobacillus kaustophilus (strain HTA426)).